The primary structure comprises 355 residues: Zinc finger protein CONSTANS-LIKE 1 (355 aa).

Zn(2+) contacts are provided by C12, C15, C35, H40, C55, C58, C78, and H83. Residues C12–V54 form a B box-type 1; atypical zinc finger. Residues C55–I97 form a B box-type 2; atypical zinc finger. The segment covering E252–R264 has biased composition (polar residues). The disordered stretch occupies residues E252 to L281. Positions R286–K328 constitute a CCT domain.

The protein belongs to the CONSTANS family. Highly expressed in leaves and at lower levels in stems, flowers and siliques. Not detected in roots.

Its subcellular location is the nucleus. Putative transcription factor that may be involved in the light input to the circadian clock but does not affect flowering time. The sequence is that of Zinc finger protein CONSTANS-LIKE 1 (COL1) from Arabidopsis thaliana (Mouse-ear cress).